The following is a 638-amino-acid chain: Chaperone protein HtpG (638 aa).

Residues 1 to 328 (MGDVEELKFS…SSDLPLNISR (328 aa)) are a; substrate-binding. The segment at 329–558 (ETLQNNMVIE…EHALDIRMER (230 aa)) is b. The disordered stretch occupies residues 484 to 508 (LEKFTEGDDQQSTKKKKEKKDTDDA). A c region spans residues 559-638 (FLREQKQLSY…NQVLARLFKK (80 aa)).

The protein belongs to the heat shock protein 90 family. As to quaternary structure, homodimer.

Its subcellular location is the cytoplasm. Molecular chaperone. Has ATPase activity. The protein is Chaperone protein HtpG of Anaplasma marginale (strain St. Maries).